The primary structure comprises 346 residues: Methylthioribose-1-phosphate isomerase (346 aa).

Residues 54–56, R91, and Q192 each bind substrate; that span reads RGA. The active-site Proton donor is the D233. 243–244 lines the substrate pocket; it reads NK.

Belongs to the eIF-2B alpha/beta/delta subunits family. MtnA subfamily.

The enzyme catalyses 5-(methylsulfanyl)-alpha-D-ribose 1-phosphate = 5-(methylsulfanyl)-D-ribulose 1-phosphate. It participates in amino-acid biosynthesis; L-methionine biosynthesis via salvage pathway; L-methionine from S-methyl-5-thio-alpha-D-ribose 1-phosphate: step 1/6. In terms of biological role, catalyzes the interconversion of methylthioribose-1-phosphate (MTR-1-P) into methylthioribulose-1-phosphate (MTRu-1-P). The polypeptide is Methylthioribose-1-phosphate isomerase (Yersinia pseudotuberculosis serotype IB (strain PB1/+)).